A 236-amino-acid chain; its full sequence is Pyridoxal phosphate homeostasis protein (236 aa).

Position 36 is an N6-(pyridoxal phosphate)lysine (lysine 36).

The protein belongs to the pyridoxal phosphate-binding protein YggS/PROSC family.

Its function is as follows. Pyridoxal 5'-phosphate (PLP)-binding protein, which is involved in PLP homeostasis. This Vibrio cholerae serotype O1 (strain ATCC 39315 / El Tor Inaba N16961) protein is Pyridoxal phosphate homeostasis protein.